The sequence spans 763 residues: Phosphoglycerol transferase I (763 aa).

The next 4 helical transmembrane spans lie at methionine 1 to alanine 21, tryptophan 26 to phenylalanine 46, isoleucine 77 to isoleucine 97, and phenylalanine 108 to phenylalanine 128.

This sequence belongs to the OpgB family.

It is found in the cell inner membrane. The catalysed reaction is a phosphatidylglycerol + a membrane-derived-oligosaccharide D-glucose = a 1,2-diacyl-sn-glycerol + a membrane-derived-oligosaccharide 6-(glycerophospho)-D-glucose.. Its pathway is glycan metabolism; osmoregulated periplasmic glucan (OPG) biosynthesis. Functionally, transfers a phosphoglycerol residue from phosphatidylglycerol to the membrane-bound nascent glucan backbones. This Escherichia coli (strain UTI89 / UPEC) protein is Phosphoglycerol transferase I.